The sequence spans 332 residues: L-lactate dehydrogenase A chain (332 aa).

Residues 29–57 and arginine 99 each bind NAD(+); that span reads GAVG…IEDK. Residues arginine 106, asparagine 138, and arginine 169 each coordinate substrate. Asparagine 138 is a binding site for NAD(+). The active-site Proton acceptor is the histidine 193. Threonine 248 is a substrate binding site.

It belongs to the LDH/MDH superfamily. LDH family. In terms of assembly, homotetramer.

It localises to the cytoplasm. It catalyses the reaction (S)-lactate + NAD(+) = pyruvate + NADH + H(+). It functions in the pathway fermentation; pyruvate fermentation to lactate; (S)-lactate from pyruvate: step 1/1. In terms of biological role, interconverts simultaneously and stereospecifically pyruvate and lactate with concomitant interconversion of NADH and NAD(+). In Trachemys scripta elegans (Red-eared slider turtle), this protein is L-lactate dehydrogenase A chain (LDHA).